We begin with the raw amino-acid sequence, 156 residues long: Small ribosomal subunit protein uS7 (156 aa).

The protein belongs to the universal ribosomal protein uS7 family. In terms of assembly, part of the 30S ribosomal subunit. Contacts proteins S9 and S11.

In terms of biological role, one of the primary rRNA binding proteins, it binds directly to 16S rRNA where it nucleates assembly of the head domain of the 30S subunit. Is located at the subunit interface close to the decoding center, probably blocks exit of the E-site tRNA. The chain is Small ribosomal subunit protein uS7 from Geobacillus kaustophilus (strain HTA426).